We begin with the raw amino-acid sequence, 476 residues long: Lactate utilization protein B (476 aa).

2 consecutive 4Fe-4S ferredoxin-type domains span residues 304 to 334 (GGEF…GHTY) and 353 to 382 (YDDF…LHQL). [4Fe-4S] cluster-binding residues include cysteine 313, cysteine 316, cysteine 319, cysteine 323, cysteine 366, cysteine 369, and cysteine 373. The interval 452-476 (RDFPAPNKNSFRNWMKHRTKGDEES) is disordered.

The protein belongs to the LutB/YkgF family.

Its function is as follows. Is involved in L-lactate degradation and allows cells to grow with lactate as the sole carbon source. Has probably a role as an electron transporter during oxidation of L-lactate. In Lysinibacillus sphaericus (strain C3-41), this protein is Lactate utilization protein B.